The primary structure comprises 54 residues: Large ribosomal subunit protein bL33B (54 aa).

It belongs to the bacterial ribosomal protein bL33 family.

This chain is Large ribosomal subunit protein bL33B (rpmG2), found in Streptomyces coelicolor (strain ATCC BAA-471 / A3(2) / M145).